The chain runs to 231 residues: Large ribosomal subunit protein uL1 (231 aa).

The protein belongs to the universal ribosomal protein uL1 family. Part of the 50S ribosomal subunit.

Functionally, binds directly to 23S rRNA. The L1 stalk is quite mobile in the ribosome, and is involved in E site tRNA release. Protein L1 is also a translational repressor protein, it controls the translation of the L11 operon by binding to its mRNA. The protein is Large ribosomal subunit protein uL1 of Chromobacterium violaceum (strain ATCC 12472 / DSM 30191 / JCM 1249 / CCUG 213 / NBRC 12614 / NCIMB 9131 / NCTC 9757 / MK).